We begin with the raw amino-acid sequence, 295 residues long: Cyclic dipyrimidine nucleotide synthase CdnE (295 aa).

The tract at residues 1–25 (MSIDWEQTFRKWSKPSSETESTKAE) is disordered. Residues Gln51, Ser53, and Asn59 each coordinate UTP. Mg(2+)-binding residues include Asp65 and Asp67. Residues Asp67, Asp124, and Lys125 each contribute to the UTP site. Asp128 and Asp139 together coordinate Mg(2+). The UTP site is built by Asp139, Asn173, Lys201, and Ser220. The Pyrimidine specificity motif (R/Q)xW in donor pocket signature appears at 274–276 (QMW).

Belongs to the CD-NTase family. E02 subfamily. Requires Mg(2+) as cofactor.

It catalyses the reaction 2 UTP = c-di-UMP + 2 diphosphate. It carries out the reaction UTP + CTP = cyclic CMP-UMP + 2 diphosphate. Functionally, cyclic nucleotide synthase (second messenger synthase) of a CBASS antivirus system. CBASS (cyclic oligonucleotide-based antiphage signaling system) provides immunity against bacteriophage. The CD-NTase protein synthesizes cyclic nucleotides in response to infection; these serve as specific second messenger signals. The signals activate a diverse range of effectors, leading to bacterial cell death and thus abortive phage infection. A type I-B(UU) CBASS system. Cyclic dinucleotide synthase that catalyzes the synthesis of 3',3'-cyclic UMP-UMP (c-di-UMP) as the major product, and of 3',3'-cyclic CMP-UMP as a minor product, which are second messengers for cell signal transduction. This Legionella pneumophila protein is Cyclic dipyrimidine nucleotide synthase CdnE.